The sequence spans 652 residues: DNA mismatch repair protein MutL (652 aa).

It belongs to the DNA mismatch repair MutL/HexB family.

This protein is involved in the repair of mismatches in DNA. It is required for dam-dependent methyl-directed DNA mismatch repair. May act as a 'molecular matchmaker', a protein that promotes the formation of a stable complex between two or more DNA-binding proteins in an ATP-dependent manner without itself being part of a final effector complex. The chain is DNA mismatch repair protein MutL from Neorickettsia sennetsu (strain ATCC VR-367 / Miyayama) (Ehrlichia sennetsu).